The chain runs to 474 residues: Adenosylhomocysteinase (474 aa).

Substrate is bound by residues T53, D135, and E197. 198–200 (TTT) contributes to the NAD(+) binding site. 2 residues coordinate substrate: K227 and D231. Residues N232, 261–266 (GYGDVG), E284, N319, 340–342 (IGH), and N388 contribute to the NAD(+) site.

This sequence belongs to the adenosylhomocysteinase family. NAD(+) serves as cofactor.

It localises to the cytoplasm. It carries out the reaction S-adenosyl-L-homocysteine + H2O = L-homocysteine + adenosine. Its pathway is amino-acid biosynthesis; L-homocysteine biosynthesis; L-homocysteine from S-adenosyl-L-homocysteine: step 1/1. In terms of biological role, may play a key role in the regulation of the intracellular concentration of adenosylhomocysteine. The polypeptide is Adenosylhomocysteinase (Corynebacterium glutamicum (strain ATCC 13032 / DSM 20300 / JCM 1318 / BCRC 11384 / CCUG 27702 / LMG 3730 / NBRC 12168 / NCIMB 10025 / NRRL B-2784 / 534)).